The chain runs to 122 residues: Large ribosomal subunit protein bL12 (122 aa).

The protein belongs to the bacterial ribosomal protein bL12 family. As to quaternary structure, homodimer. Part of the ribosomal stalk of the 50S ribosomal subunit. Forms a multimeric L10(L12)X complex, where L10 forms an elongated spine to which 2 to 4 L12 dimers bind in a sequential fashion. Binds GTP-bound translation factors.

Functionally, forms part of the ribosomal stalk which helps the ribosome interact with GTP-bound translation factors. Is thus essential for accurate translation. This Latilactobacillus sakei subsp. sakei (strain 23K) (Lactobacillus sakei subsp. sakei) protein is Large ribosomal subunit protein bL12.